A 383-amino-acid polypeptide reads, in one-letter code: ATP phosphoribosyltransferase regulatory subunit (383 aa).

Belongs to the class-II aminoacyl-tRNA synthetase family. HisZ subfamily. As to quaternary structure, heteromultimer composed of HisG and HisZ subunits.

It localises to the cytoplasm. It participates in amino-acid biosynthesis; L-histidine biosynthesis; L-histidine from 5-phospho-alpha-D-ribose 1-diphosphate: step 1/9. Functionally, required for the first step of histidine biosynthesis. May allow the feedback regulation of ATP phosphoribosyltransferase activity by histidine. This chain is ATP phosphoribosyltransferase regulatory subunit, found in Neisseria gonorrhoeae (strain NCCP11945).